We begin with the raw amino-acid sequence, 335 residues long: Putative T-box protein 7 (335 aa).

Positions 73-246 (LWSTFLECGT…NNPFAKGFRN (174 aa)) form a DNA-binding region, T-box.

The protein localises to the nucleus. The polypeptide is Putative T-box protein 7 (Caenorhabditis elegans).